An 887-amino-acid chain; its full sequence is Pyruvate dehydrogenase E1 component (887 aa).

Homodimer. Part of the PDH complex, consisting of multiple copies of pyruvate dehydrogenase (E1), dihydrolipoamide acetyltransferase (E2) and lipoamide dehydrogenase (E3). Thiamine diphosphate is required as a cofactor.

The enzyme catalyses N(6)-[(R)-lipoyl]-L-lysyl-[protein] + pyruvate + H(+) = N(6)-[(R)-S(8)-acetyldihydrolipoyl]-L-lysyl-[protein] + CO2. Component of the pyruvate dehydrogenase (PDH) complex, that catalyzes the overall conversion of pyruvate to acetyl-CoA and CO(2). The protein is Pyruvate dehydrogenase E1 component (aceE) of Buchnera aphidicola subsp. Baizongia pistaciae (strain Bp).